The following is a 249-amino-acid chain: Phosphoadenosine 5'-phosphosulfate reductase (249 aa).

Catalysis depends on cysteine 230, which acts as the Nucleophile; cysteine thiosulfonate intermediate.

Belongs to the PAPS reductase family. CysH subfamily.

Its subcellular location is the cytoplasm. It carries out the reaction [thioredoxin]-disulfide + sulfite + adenosine 3',5'-bisphosphate + 2 H(+) = [thioredoxin]-dithiol + 3'-phosphoadenylyl sulfate. It functions in the pathway sulfur metabolism; hydrogen sulfide biosynthesis; sulfite from sulfate: step 3/3. Functionally, catalyzes the formation of sulfite from phosphoadenosine 5'-phosphosulfate (PAPS) using thioredoxin as an electron donor. This chain is Phosphoadenosine 5'-phosphosulfate reductase, found in Synechocystis sp. (strain ATCC 27184 / PCC 6803 / Kazusa).